We begin with the raw amino-acid sequence, 606 residues long: Elongation factor 4 (606 aa).

Residues 10 to 192 (IRKKNFCIIA…AICKYVPSPR (183 aa)) form the tr-type G domain. GTP contacts are provided by residues 22 to 27 (DHGKST) and 139 to 142 (NKID).

Belongs to the TRAFAC class translation factor GTPase superfamily. Classic translation factor GTPase family. LepA subfamily.

The protein resides in the cell inner membrane. It catalyses the reaction GTP + H2O = GDP + phosphate + H(+). Required for accurate and efficient protein synthesis under certain stress conditions. May act as a fidelity factor of the translation reaction, by catalyzing a one-codon backward translocation of tRNAs on improperly translocated ribosomes. Back-translocation proceeds from a post-translocation (POST) complex to a pre-translocation (PRE) complex, thus giving elongation factor G a second chance to translocate the tRNAs correctly. Binds to ribosomes in a GTP-dependent manner. The polypeptide is Elongation factor 4 (Borreliella burgdorferi (strain ATCC 35210 / DSM 4680 / CIP 102532 / B31) (Borrelia burgdorferi)).